The following is a 961-amino-acid chain: Glycine dehydrogenase (decarboxylating) (961 aa).

At Lys-702 the chain carries N6-(pyridoxal phosphate)lysine.

Belongs to the GcvP family. As to quaternary structure, the glycine cleavage system is composed of four proteins: P, T, L and H. Pyridoxal 5'-phosphate is required as a cofactor.

The catalysed reaction is N(6)-[(R)-lipoyl]-L-lysyl-[glycine-cleavage complex H protein] + glycine + H(+) = N(6)-[(R)-S(8)-aminomethyldihydrolipoyl]-L-lysyl-[glycine-cleavage complex H protein] + CO2. Its function is as follows. The glycine cleavage system catalyzes the degradation of glycine. The P protein binds the alpha-amino group of glycine through its pyridoxal phosphate cofactor; CO(2) is released and the remaining methylamine moiety is then transferred to the lipoamide cofactor of the H protein. This Rhodopseudomonas palustris (strain BisA53) protein is Glycine dehydrogenase (decarboxylating).